A 162-amino-acid chain; its full sequence is Cytochrome c-type biogenesis protein CcmE (162 aa).

Topologically, residues 1-7 are cytoplasmic; the sequence is MTRKQRR. Residues 8-28 form a helical; Signal-anchor for type II membrane protein membrane-spanning segment; the sequence is LTMIGGALVVLGIAAALVLNA. Residues 29 to 162 lie on the Periplasmic side of the membrane; the sequence is LRDSIVFFST…EASSKQEVSQ (134 aa). Heme is bound by residues H122 and Y126. Residues 140-162 form a disordered region; it reads HWKDDYGAQPGAAEASSKQEVSQ.

It belongs to the CcmE/CycJ family.

The protein localises to the cell inner membrane. Heme chaperone required for the biogenesis of c-type cytochromes. Transiently binds heme delivered by CcmC and transfers the heme to apo-cytochromes in a process facilitated by CcmF and CcmH. The protein is Cytochrome c-type biogenesis protein CcmE of Nitrobacter winogradskyi (strain ATCC 25391 / DSM 10237 / CIP 104748 / NCIMB 11846 / Nb-255).